The following is a 247-amino-acid chain: Dihydroorotate dehydrogenase B (NAD(+)), electron transfer subunit (247 aa).

The 95-residue stretch at 2–96 (RWKMKARVLS…TGPHGNGFEI (95 aa)) folds into the FAD-binding FR-type domain. FAD contacts are provided by residues 49 to 52 (RPFS), 64 to 66 (LYQ), and 71 to 72 (GT). Positions 210, 215, 218, and 234 each coordinate [2Fe-2S] cluster.

This sequence belongs to the PyrK family. As to quaternary structure, heterotetramer of 2 PyrK and 2 PyrD type B subunits. Requires [2Fe-2S] cluster as cofactor. The cofactor is FAD.

The protein operates within pyrimidine metabolism; UMP biosynthesis via de novo pathway; orotate from (S)-dihydroorotate (NAD(+) route): step 1/1. Its function is as follows. Responsible for channeling the electrons from the oxidation of dihydroorotate from the FMN redox center in the PyrD type B subunit to the ultimate electron acceptor NAD(+). This is Dihydroorotate dehydrogenase B (NAD(+)), electron transfer subunit from Caldanaerobacter subterraneus subsp. tengcongensis (strain DSM 15242 / JCM 11007 / NBRC 100824 / MB4) (Thermoanaerobacter tengcongensis).